The sequence spans 104 residues: Small ribosomal subunit protein uS10 (104 aa).

The protein belongs to the universal ribosomal protein uS10 family. As to quaternary structure, part of the 30S ribosomal subunit.

In terms of biological role, involved in the binding of tRNA to the ribosomes. The protein is Small ribosomal subunit protein uS10 of Helicobacter pylori (strain J99 / ATCC 700824) (Campylobacter pylori J99).